The chain runs to 351 residues: Nicotinate-nucleotide--dimethylbenzimidazole phosphoribosyltransferase (351 aa).

Glu317 serves as the catalytic Proton acceptor.

Belongs to the CobT family.

The catalysed reaction is 5,6-dimethylbenzimidazole + nicotinate beta-D-ribonucleotide = alpha-ribazole 5'-phosphate + nicotinate + H(+). Its pathway is nucleoside biosynthesis; alpha-ribazole biosynthesis; alpha-ribazole from 5,6-dimethylbenzimidazole: step 1/2. Catalyzes the synthesis of alpha-ribazole-5'-phosphate from nicotinate mononucleotide (NAMN) and 5,6-dimethylbenzimidazole (DMB). The chain is Nicotinate-nucleotide--dimethylbenzimidazole phosphoribosyltransferase from Pseudomonas aeruginosa (strain UCBPP-PA14).